The primary structure comprises 60 residues: Cytotoxin 2a (60 aa).

4 disulfide bridges follow: C3/C21, C14/C38, C42/C53, and C54/C59.

The protein belongs to the three-finger toxin family. Short-chain subfamily. Type IA cytotoxin sub-subfamily. Monomer in solution; Homodimer and oligomer in the presence of negatively charged lipids forming a pore with a size ranging between 20 and 30 Angstroms. In terms of tissue distribution, expressed by the venom gland.

The protein localises to the secreted. The protein resides in the target cell membrane. In terms of biological role, shows cytolytic activity on many different cells by forming pore in lipid membranes. In vivo, increases heart rate or kills the animal by cardiac arrest. In addition, it binds to heparin with high affinity, interacts with Kv channel-interacting protein 1 (KCNIP1) in a calcium-independent manner, and binds to integrin alpha-V/beta-3 (ITGAV/ITGB3) with moderate affinity. Preferentially binds acidic phospholipids like phosphatidylserine, phosphatidic acid and phosphatidyl glycerol. Has hemolytic activity towards human erythrocytes (EC(50)=1.024 uM) and cytolytic activity towards various cell lines. The sequence is that of Cytotoxin 2a from Naja naja (Indian cobra).